The following is a 191-amino-acid chain: Surfactant protein C (191 aa).

Positions 1-23 (MDVGSKEVLMESPPDYSAAPRGR) are excised as a propeptide. 2 S-palmitoyl cysteine lipidation sites follow: Cys-28 and Cys-29. The propeptide occupies 59 to 191 (HMSQKHTEMV…LCGEVPLYYI (133 aa)). The 98-residue stretch at 94–191 (FSFGSTGLVV…LCGEVPLYYI (98 aa)) folds into the BRICHOS domain. Cys-121 and Cys-183 form a disulfide bridge.

It is found in the secreted. The protein resides in the extracellular space. Its subcellular location is the surface film. Its function is as follows. Pulmonary surfactant associated proteins promote alveolar stability by lowering the surface tension at the air-liquid interface in the peripheral air spaces. This Macaca mulatta (Rhesus macaque) protein is Surfactant protein C (SFTPC).